Consider the following 186-residue polypeptide: Der GTPase-activating protein YihI (186 aa).

The segment at 39 to 77 (LDAKAREDKKKRKHKGLASGSRHSAVEEKANKLQNEIKD) is disordered. Positions 62–77 (SAVEEKANKLQNEIKD) are enriched in basic and acidic residues.

This sequence belongs to the YihI family. In terms of assembly, interacts with Der.

In terms of biological role, a GTPase-activating protein (GAP) that modifies Der/EngA GTPase function. May play a role in ribosome biogenesis. The sequence is that of Der GTPase-activating protein YihI from Haemophilus influenzae (strain 86-028NP).